We begin with the raw amino-acid sequence, 459 residues long: Glycosyl hydrolase family 109 protein 1 (459 aa).

Residues 1 to 31 (MHNIHRRHFLKAAGAVTAGLVTANIALNANA) constitute a signal peptide (tat-type signal). NAD(+) is bound by residues 64-65 (ER), Asp-86, 135-138 (WEWH), 155-156 (EV), and Asn-184. Residues Tyr-213, Arg-232, 244–247 (YPTH), and Tyr-326 each bind substrate. Tyr-244 serves as a coordination point for NAD(+).

The protein belongs to the Gfo/Idh/MocA family. Glycosyl hydrolase 109 subfamily. NAD(+) is required as a cofactor. Post-translationally, predicted to be exported by the Tat system. The position of the signal peptide cleavage has not been experimentally proven.

In terms of biological role, glycosidase. This is Glycosyl hydrolase family 109 protein 1 from Shewanella sp. (strain MR-7).